Here is a 1055-residue protein sequence, read N- to C-terminus: DNA-directed RNA polymerase subunit beta' (1055 aa).

Zn(2+) is bound by residues cysteine 60, cysteine 62, cysteine 75, and cysteine 78. Residues aspartate 449, aspartate 451, and aspartate 453 each contribute to the Mg(2+) site. 4 residues coordinate Zn(2+): cysteine 818, cysteine 892, cysteine 899, and cysteine 902.

Belongs to the RNA polymerase beta' chain family. In terms of assembly, the RNAP catalytic core consists of 2 alpha, 1 beta, 1 beta' and 1 omega subunit. When a sigma factor is associated with the core the holoenzyme is formed, which can initiate transcription. It depends on Mg(2+) as a cofactor. Zn(2+) serves as cofactor.

The enzyme catalyses RNA(n) + a ribonucleoside 5'-triphosphate = RNA(n+1) + diphosphate. In terms of biological role, DNA-dependent RNA polymerase catalyzes the transcription of DNA into RNA using the four ribonucleoside triphosphates as substrates. The protein is DNA-directed RNA polymerase subunit beta' of Pediococcus acidilactici.